The chain runs to 304 residues: Ornithine carbamoyltransferase (304 aa).

Residues 47-50 (STRT), R98, and 125-128 (HPCQ) contribute to the carbamoyl phosphate site. Residues N156, D221, and 225 to 226 (SM) contribute to the L-ornithine site. Carbamoyl phosphate is bound by residues 262 to 263 (CL) and R290.

This sequence belongs to the aspartate/ornithine carbamoyltransferase superfamily. OTCase family.

It is found in the cytoplasm. It carries out the reaction carbamoyl phosphate + L-ornithine = L-citrulline + phosphate + H(+). It functions in the pathway amino-acid biosynthesis; L-arginine biosynthesis; L-arginine from L-ornithine and carbamoyl phosphate: step 1/3. Reversibly catalyzes the transfer of the carbamoyl group from carbamoyl phosphate (CP) to the N(epsilon) atom of ornithine (ORN) to produce L-citrulline. This Methanococcus aeolicus (strain ATCC BAA-1280 / DSM 17508 / OCM 812 / Nankai-3) protein is Ornithine carbamoyltransferase.